We begin with the raw amino-acid sequence, 1001 residues long: Phosphoenolpyruvate carboxylase (1001 aa).

Residues His-189 and Lys-642 contribute to the active site.

This sequence belongs to the PEPCase type 1 family. Mg(2+) is required as a cofactor.

It catalyses the reaction oxaloacetate + phosphate = phosphoenolpyruvate + hydrogencarbonate. Functionally, forms oxaloacetate, a four-carbon dicarboxylic acid source for the tricarboxylic acid cycle. This is Phosphoenolpyruvate carboxylase from Prochlorococcus marinus (strain SARG / CCMP1375 / SS120).